A 486-amino-acid chain; its full sequence is Cardiolipin synthase A (486 aa).

2 consecutive transmembrane segments (helical) span residues 3–23 (TFYT…IAGV) and 38–58 (MAWL…YLSF). PLD phosphodiesterase domains lie at 219–246 (MDLR…VDPR) and 399–426 (EGGL…DMRS). Residues histidine 224, lysine 226, aspartate 231, histidine 404, lysine 406, and aspartate 411 contribute to the active site.

Belongs to the phospholipase D family. Cardiolipin synthase subfamily. ClsA sub-subfamily.

The protein resides in the cell inner membrane. It carries out the reaction 2 a 1,2-diacyl-sn-glycero-3-phospho-(1'-sn-glycerol) = a cardiolipin + glycerol. Catalyzes the reversible phosphatidyl group transfer from one phosphatidylglycerol molecule to another to form cardiolipin (CL) (diphosphatidylglycerol) and glycerol. The chain is Cardiolipin synthase A from Klebsiella pneumoniae subsp. pneumoniae (strain ATCC 700721 / MGH 78578).